The chain runs to 354 residues: Heat-inducible transcription repressor HrcA (354 aa).

It belongs to the HrcA family.

Negative regulator of class I heat shock genes (grpE-dnaK-dnaJ and groELS operons). Prevents heat-shock induction of these operons. This chain is Heat-inducible transcription repressor HrcA, found in Herpetosiphon aurantiacus (strain ATCC 23779 / DSM 785 / 114-95).